A 1335-amino-acid chain; its full sequence is Bifunctional autolysin (1335 aa).

A signal peptide spans 1 to 29; that stretch reads MAKKFNYKLPSMVALTLFGTAFTAHQANA. 3 disordered regions span residues 51-88, 100-262, and 514-535; these read QAEK…QSTT, NEIS…KYKE, and WGTT…NNKL. 5 stretches are compositionally biased toward polar residues: residues 58–88, 100–127, 143–155, 176–223, and 244–258; these read EVTQ…QSTT, NEIS…VTKN, TDTN…QSVA, TASQ…NASG, and SLNN…TTSY. The segment at 303-863 is N-acetylmuramoyl-L-alanine amidase; sequence VSSQKTSSLP…LSTQSTPAPK (561 aa). A compositionally biased stretch (low complexity) spans 515 to 531; it reads GTTSTKPSQPSKPSGGT. GW domains are found at residues 533–610, 612–686, 700–774, 776–850, 868–943, 945–1020, and 1023–1096; these read NKLT…YNTA, APVK…TASK, TVTN…YNTA, SPVK…APSK, STQT…TQNI, KQTQ…QNST, and QSTP…KEKI. Positions 864–1335 are endo-beta-N-acetylglucosaminidase; that stretch reads QVKPSTQTVN…GKYFEIPIYK (472 aa).

It in the N-terminal section; belongs to the N-acetylmuramoyl-L-alanine amidase 2 family. In the C-terminal section; belongs to the glycosyl hydrolase 73 family. In terms of assembly, oligomer; forms a ring structure at the cell surface which is important for efficient partitioning of daughter cells after cell division. Undergoes proteolytic processing to generate the two extracellular lytic enzymes, probably at the septal region on the cell surface.

The protein localises to the secreted. The catalysed reaction is Hydrolyzes the link between N-acetylmuramoyl residues and L-amino acid residues in certain cell-wall glycopeptides.. It catalyses the reaction an N(4)-(oligosaccharide-(1-&gt;3)-[oligosaccharide-(1-&gt;6)]-beta-D-Man-(1-&gt;4)-beta-D-GlcNAc-(1-&gt;4)-alpha-D-GlcNAc)-L-asparaginyl-[protein] + H2O = an oligosaccharide-(1-&gt;3)-[oligosaccharide-(1-&gt;6)]-beta-D-Man-(1-&gt;4)-D-GlcNAc + N(4)-(N-acetyl-beta-D-glucosaminyl)-L-asparaginyl-[protein]. Its function is as follows. Endohydrolysis of the di-N-acetylchitobiosyl unit in high-mannose glycopeptides and glycoproteins containing the -[(Man)5(GlcNAc)2]-Asn structure. One N-acetyl-D-glucosamine residue remains attached to the protein; the rest of the oligosaccharide is released intact. Cleaves the peptidoglycan connecting the daughter cells at the end of the cell division cycle, resulting in the separation of the two newly divided cells. Acts as an autolysin in penicillin-induced lysis. In Staphylococcus epidermidis (strain ATCC 12228 / FDA PCI 1200), this protein is Bifunctional autolysin (atl).